We begin with the raw amino-acid sequence, 367 residues long: Serine/threonine-protein kinase Sgk2 (367 aa).

Residues 1–26 (MNSSPAGTPSPQPSRANGNINLGPSA) form a disordered region. Ser-10 is modified (phosphoserine). A Protein kinase domain is found at 35–292 (FDFLKVIGKG…FLEIKNHVFF (258 aa)). ATP contacts are provided by residues 41–49 (IGKGNYGKV) and Lys-64. A Nuclear localization signal motif is present at residues 68-78 (KKSILKKKEQS). The Proton acceptor role is filled by Asp-159. Thr-193 is modified (phosphothreonine; by PDPK1). In terms of domain architecture, AGC-kinase C-terminal spans 293–367 (SPINWDDLYH…APEDDDILDC (75 aa)). Residues Ser-334 and Ser-356 each carry the phosphoserine modification. Tyr-357 is subject to Phosphotyrosine.

This sequence belongs to the protein kinase superfamily. AGC Ser/Thr protein kinase family. Post-translationally, activated by phosphorylation on Ser-356 by an unknown kinase (may be mTORC2 but not confirmed), transforming it into a substrate for PDPK1 which then phosphorylates it on Thr-193. Highly expressed in liver, kidney and pancreas, and at lower levels in brain.

The protein resides in the cytoplasm. It is found in the nucleus. The catalysed reaction is L-seryl-[protein] + ATP = O-phospho-L-seryl-[protein] + ADP + H(+). The enzyme catalyses L-threonyl-[protein] + ATP = O-phospho-L-threonyl-[protein] + ADP + H(+). With respect to regulation, two specific sites, one in the kinase domain (Thr-193) and the other in the C-terminal regulatory region (Ser-356), need to be phosphorylated for its full activation. Serine/threonine-protein kinase which is involved in the regulation of a wide variety of ion channels, membrane transporters, cell growth, survival and proliferation. Up-regulates Na(+) channels: SCNN1A/ENAC, K(+) channels: KCNA3/Kv1.3, KCNE1 and KCNQ1, amino acid transporter: SLC6A19, glutamate transporter: SLC1A6/EAAT4, glutamate receptors: GRIA1/GLUR1 and GRIK2/GLUR6, Na(+)/H(+) exchanger: SLC9A3/NHE3, and the Na(+)/K(+) ATPase. The chain is Serine/threonine-protein kinase Sgk2 (SGK2) from Homo sapiens (Human).